The following is a 133-amino-acid chain: Probable 4-amino-4-deoxy-L-arabinose-phosphoundecaprenol flippase subunit ArnF (133 aa).

Over 1–5 (MKTGY) the chain is Cytoplasmic. A helical transmembrane segment spans residues 6 to 26 (LWAIASALLVTVAQLLLKIGM). Residues 27 to 47 (SELPDLQLEKQWFDLHWLWAN) lie on the Periplasmic side of the membrane. Residues 48-68 (IIPISVVFVGLIGYVLSMVCW) traverse the membrane as a helical segment. The EamA domain occupies 51 to 125 (ISVVFVGLIG…IMLGVWLISQ (75 aa)). Residues 69–80 (LLTLRTIPLNKA) are Cytoplasmic-facing. Residues 81–101 (YPLISLSYVFVYILAVVLPWF) traverse the membrane as a helical segment. Over 102 to 103 (QE) the chain is Periplasmic. The helical transmembrane segment at 104–124 (TLSWSKTIGIIFIMLGVWLIS) threads the bilayer. Residues 125–133 (QKTEQTTSH) are Cytoplasmic-facing.

The protein belongs to the ArnF family. In terms of assembly, heterodimer of ArnE and ArnF.

The protein resides in the cell inner membrane. It participates in bacterial outer membrane biogenesis; lipopolysaccharide biosynthesis. Functionally, translocates 4-amino-4-deoxy-L-arabinose-phosphoundecaprenol (alpha-L-Ara4N-phosphoundecaprenol) from the cytoplasmic to the periplasmic side of the inner membrane. The protein is Probable 4-amino-4-deoxy-L-arabinose-phosphoundecaprenol flippase subunit ArnF of Proteus mirabilis (strain HI4320).